The following is a 251-amino-acid chain: 3-deoxy-manno-octulosonate cytidylyltransferase (251 aa).

The protein belongs to the KdsB family.

Its subcellular location is the cytoplasm. It carries out the reaction 3-deoxy-alpha-D-manno-oct-2-ulosonate + CTP = CMP-3-deoxy-beta-D-manno-octulosonate + diphosphate. It participates in nucleotide-sugar biosynthesis; CMP-3-deoxy-D-manno-octulosonate biosynthesis; CMP-3-deoxy-D-manno-octulosonate from 3-deoxy-D-manno-octulosonate and CTP: step 1/1. Its pathway is bacterial outer membrane biogenesis; lipopolysaccharide biosynthesis. In terms of biological role, activates KDO (a required 8-carbon sugar) for incorporation into bacterial lipopolysaccharide in Gram-negative bacteria. The chain is 3-deoxy-manno-octulosonate cytidylyltransferase from Brucella canis (strain ATCC 23365 / NCTC 10854 / RM-666).